The sequence spans 445 residues: Histidinol dehydrogenase (445 aa).

Positions 134, 198, and 226 each coordinate NAD(+). Substrate-binding residues include Thr-249, Gln-271, and His-274. Zn(2+)-binding residues include Gln-271 and His-274. Catalysis depends on proton acceptor residues Glu-340 and His-341. His-341, Asp-374, Glu-428, and His-433 together coordinate substrate. Asp-374 contributes to the Zn(2+) binding site. A Zn(2+)-binding site is contributed by His-433.

This sequence belongs to the histidinol dehydrogenase family. The cofactor is Zn(2+).

The enzyme catalyses L-histidinol + 2 NAD(+) + H2O = L-histidine + 2 NADH + 3 H(+). It participates in amino-acid biosynthesis; L-histidine biosynthesis; L-histidine from 5-phospho-alpha-D-ribose 1-diphosphate: step 9/9. In terms of biological role, catalyzes the sequential NAD-dependent oxidations of L-histidinol to L-histidinaldehyde and then to L-histidine. The chain is Histidinol dehydrogenase from Nocardia farcinica (strain IFM 10152).